A 361-amino-acid polypeptide reads, in one-letter code: D-alanine--D-alanine ligase (361 aa).

In terms of domain architecture, ATP-grasp spans 134-344; that stretch reads KILAQRAGVP…YTDLITKLID (211 aa). Residue 169–224 participates in ATP binding; the sequence is ASQLGSDLFVKPSNQGSSVGVSHVTNEKEYKVALAEAFKYDDKVLVEETVHGTEVE. Residues Asp297, Glu311, and Asn313 each coordinate Mg(2+).

It belongs to the D-alanine--D-alanine ligase family. Requires Mg(2+) as cofactor. Mn(2+) is required as a cofactor.

The protein localises to the cytoplasm. It catalyses the reaction 2 D-alanine + ATP = D-alanyl-D-alanine + ADP + phosphate + H(+). Its pathway is cell wall biogenesis; peptidoglycan biosynthesis. Cell wall formation. The chain is D-alanine--D-alanine ligase from Lactobacillus gasseri (strain ATCC 33323 / DSM 20243 / BCRC 14619 / CIP 102991 / JCM 1131 / KCTC 3163 / NCIMB 11718 / NCTC 13722 / AM63).